Consider the following 392-residue polypeptide: Formate-dependent phosphoribosylglycinamide formyltransferase (392 aa).

N(1)-(5-phospho-beta-D-ribosyl)glycinamide-binding positions include 22-23 (EL) and E82. Residues R114, K155, 160-165 (SSGKGQ), 195-198 (EGVV), and E203 each bind ATP. The 190-residue stretch at 119-308 (RLAAEELQLP…EFALHVRAFL (190 aa)) folds into the ATP-grasp domain. E267 and E279 together coordinate Mg(2+). Residues D286, K355, and 362–363 (RR) each bind N(1)-(5-phospho-beta-D-ribosyl)glycinamide.

Belongs to the PurK/PurT family. Homodimer.

The catalysed reaction is N(1)-(5-phospho-beta-D-ribosyl)glycinamide + formate + ATP = N(2)-formyl-N(1)-(5-phospho-beta-D-ribosyl)glycinamide + ADP + phosphate + H(+). It functions in the pathway purine metabolism; IMP biosynthesis via de novo pathway; N(2)-formyl-N(1)-(5-phospho-D-ribosyl)glycinamide from N(1)-(5-phospho-D-ribosyl)glycinamide (formate route): step 1/1. Its function is as follows. Involved in the de novo purine biosynthesis. Catalyzes the transfer of formate to 5-phospho-ribosyl-glycinamide (GAR), producing 5-phospho-ribosyl-N-formylglycinamide (FGAR). Formate is provided by PurU via hydrolysis of 10-formyl-tetrahydrofolate. This chain is Formate-dependent phosphoribosylglycinamide formyltransferase, found in Shigella dysenteriae serotype 1 (strain Sd197).